Reading from the N-terminus, the 651-residue chain is Probable potassium transport system protein Kup (651 aa).

Transmembrane regions (helical) follow at residues 41–61 (LVLGALGVVYGDIGTSPIYAF), 82–102 (VVSLIFWALTLVVTVKYVLFV), 130–150 (LILGVGICGAALFFGDAVITP), 163–183 (IVAPNLTPFVVPATVVILVTL), 194–214 (VAIVFGPIMALWFVALGASGL), 235–255 (FLTVSPAVAFVTVGAVFLAMT), 276–296 (WLWIVFPCLLLNYFGQAAFIL), 309–329 (MIPSFALWPMVLLATAATVIA), 366–386 (IYIPRVNLLLGLAVVILVLGF), 395–415 (AYGIAVTGNMLVTTVLLYIVM), 426–446 (ALPIILGFLVIDMLFFSANII), and 450–470 (EGGWASIGIATVLVLIMWTWV).

This sequence belongs to the HAK/KUP transporter (TC 2.A.72) family.

It is found in the cell inner membrane. It carries out the reaction K(+)(in) + H(+)(in) = K(+)(out) + H(+)(out). In terms of biological role, transport of potassium into the cell. Likely operates as a K(+):H(+) symporter. The polypeptide is Probable potassium transport system protein Kup (Brucella melitensis biotype 2 (strain ATCC 23457)).